The chain runs to 320 residues: Cytochrome f (320 aa).

An N-terminal signal peptide occupies residues 1–35; sequence MQTRNTLSWIKEEITRSISVSLMIYIITWASISNA. 4 residues coordinate heme: Tyr36, Cys56, Cys59, and His60. Residues 286-306 traverse the membrane as a helical segment; sequence VQGLLFFLASVVLAQIFLVLK.

It belongs to the cytochrome f family. In terms of assembly, the 4 large subunits of the cytochrome b6-f complex are cytochrome b6, subunit IV (17 kDa polypeptide, petD), cytochrome f and the Rieske protein, while the 4 small subunits are PetG, PetL, PetM and PetN. The complex functions as a dimer. Requires heme as cofactor.

Its subcellular location is the plastid. It localises to the chloroplast thylakoid membrane. In terms of biological role, component of the cytochrome b6-f complex, which mediates electron transfer between photosystem II (PSII) and photosystem I (PSI), cyclic electron flow around PSI, and state transitions. In Carica papaya (Papaya), this protein is Cytochrome f.